The sequence spans 298 residues: Iron/alpha-ketoglutarate-dependent dioxygenase ausO (298 aa).

Fe cation is bound by residues H130, D132, and H211.

The protein belongs to the PhyH family. In terms of assembly, homodimer. Fe cation is required as a cofactor.

Its pathway is secondary metabolite biosynthesis; terpenoid biosynthesis. Functionally, iron/alpha-ketoglutarate-dependent dioxygenase; part of the gene cluster that mediates the biosynthesis of calidodehydroaustin, a fungal meroterpenoid. The first step of the pathway is the synthesis of 3,5-dimethylorsellinic acid by the polyketide synthase ausA. 3,5-dimethylorsellinic acid is then prenylated by the polyprenyl transferase ausN. Further epoxidation by the FAD-dependent monooxygenase ausM and cyclization by the probable terpene cyclase ausL lead to the formation of protoaustinoid A. Protoaustinoid A is then oxidized to spiro-lactone preaustinoid A3 by the combined action of the FAD-binding monooxygenases ausB and ausC, and the dioxygenase ausE. Acid-catalyzed keto-rearrangement and ring contraction of the tetraketide portion of preaustinoid A3 by ausJ lead to the formation of preaustinoid A4. The aldo-keto reductase ausK, with the help of ausH, is involved in the next step by transforming preaustinoid A4 into isoaustinone which is in turn hydroxylated by the P450 monooxygenase ausI to form austinolide. The cytochrome P450 monooxygenase ausG modifies austinolide to austinol. Austinol is further acetylated to austin by the O-acetyltransferase ausP, which spontaneously changes to dehydroaustin. The cytochrome P450 monooxygenase ausR then converts dehydroaustin is into 7-dehydrodehydroaustin. The hydroxylation catalyzed by ausR permits the O-acetyltransferase ausQ to add an additional acetyl group to the molecule, leading to the formation of acetoxydehydroaustin. The short chain dehydrogenase ausT catalyzes the reduction of the double bond present between carbon atoms 1 and 2 to convert 7-dehydrodehydroaustin into 1,2-dihydro-7-hydroxydehydroaustin. AusQ catalyzes not only an acetylation reaction but also the addition of the PKS ausV diketide product to 1,2-dihydro-7-hydroxydehydroaustin, forming precalidodehydroaustin. Finally, the iron/alpha-ketoglutarate-dependent dioxygenase converts precalidodehydroaustin into calidodehydroaustin. This Aspergillus calidoustus protein is Iron/alpha-ketoglutarate-dependent dioxygenase ausO.